We begin with the raw amino-acid sequence, 335 residues long: Sphingomyelinase C (335 aa).

Positions 1-28 (MEKFKIIKTIPKICGAFIFLLFFTFLFG) are cleaved as a signal peptide.

It belongs to the neutral sphingomyelinase family.

The protein localises to the secreted. The enzyme catalyses a sphingomyelin + H2O = phosphocholine + an N-acylsphing-4-enine + H(+). In terms of biological role, virulence factor that promotes intracellular proliferation by mediating the disruption of the phagocytic vacuole and the release of bacteria into the host cell cytosol. May act in concert with the phospholipases PlcA and PlcB and the hemolysin hly to mediate efficient escape from the vacuole. In Listeria ivanovii, this protein is Sphingomyelinase C (smcL).